Reading from the N-terminus, the 1520-residue chain is Myosin-5 (1520 aa).

Residues 7 to 56 (IVGSHVWVEDPHLAWIDGEVTRIDGINVHVKTKKGKTVVTNVYFPKDTEA) enclose the Myosin N-terminal SH3-like domain. One can recognise a Myosin motor domain in the interval 59 to 729 (GGVDDMTKLS…QMAELDARRA (671 aa)). Residues 153–160 (GESGAGKT) and 206–214 (NNNSSRFGK) each bind ATP. Actin-binding regions lie at residues 492–526 (LIEK…FQTF), 528–551 (EHER…AGEV), 586–610 (FHAL…KQQL), and 610–632 (LHSL…KPNN). IQ domains follow at residues 732 to 761 (LGNA…AAIV), 755 to 784 (IRNA…EAAA), 780 to 809 (IEAA…STIV), 803 to 832 (TRSS…RKAA), 828 to 857 (QRKA…AAIV), and 851 to 880 (LQKA…AARD). Residues 881 to 1047 (TGALKDAKNK…ESENKVLRQQ (167 aa)) adopt a coiled-coil conformation. Residues 1062–1100 (PKTTIIQRTPEKDTFSNGETTQLQEPETEDRPQKSLNQK) form a disordered region. Residues 1076 to 1086 (FSNGETTQLQE) are compositionally biased toward polar residues. The Dilute domain occupies 1148 to 1463 (NRIIETIASA…IATMRAEVSD (316 aa)).

It belongs to the TRAFAC class myosin-kinesin ATPase superfamily. Myosin family. Plant myosin class XI subfamily. In terms of assembly, homodimer. Interacts with MYOB1 and MYOB2. Interacts with PHOX1.

Its subcellular location is the cytoplasm. Myosin heavy chain that is required for the cell cycle-regulated transport of various organelles and proteins for their segregation. Functions by binding with its tail domain to receptor proteins on organelles and exerting force with its N-terminal motor domain against actin filaments, thereby transporting its cargo along polarized actin cables. Contributes to the trafficking of Golgi stacks, mitochondria and peroxisomes. Required for development of pavement cells, trichomes, and stigmatic papillae. The chain is Myosin-5 (XI-1) from Arabidopsis thaliana (Mouse-ear cress).